Here is a 269-residue protein sequence, read N- to C-terminus: Phosphatidylglycerol--prolipoprotein diacylglyceryl transferase (269 aa).

4 helical membrane passes run Ile14–Ile34, Val49–Ala69, Val89–Ala109, and Gly118–Ile138. An a 1,2-diacyl-sn-glycero-3-phospho-(1'-sn-glycerol)-binding site is contributed by Arg140. A run of 3 helical transmembrane segments spans residues Thr180–Phe200, Gly208–Leu228, and Thr240–Asn260.

This sequence belongs to the Lgt family.

The protein localises to the cell inner membrane. It catalyses the reaction L-cysteinyl-[prolipoprotein] + a 1,2-diacyl-sn-glycero-3-phospho-(1'-sn-glycerol) = an S-1,2-diacyl-sn-glyceryl-L-cysteinyl-[prolipoprotein] + sn-glycerol 1-phosphate + H(+). It functions in the pathway protein modification; lipoprotein biosynthesis (diacylglyceryl transfer). Catalyzes the transfer of the diacylglyceryl group from phosphatidylglycerol to the sulfhydryl group of the N-terminal cysteine of a prolipoprotein, the first step in the formation of mature lipoproteins. This Gloeobacter violaceus (strain ATCC 29082 / PCC 7421) protein is Phosphatidylglycerol--prolipoprotein diacylglyceryl transferase.